Here is a 271-residue protein sequence, read N- to C-terminus: Ribosomal RNA small subunit methyltransferase A (271 aa).

S-adenosyl-L-methionine contacts are provided by histidine 11, leucine 13, glycine 38, glutamate 58, aspartate 86, and asparagine 101.

This sequence belongs to the class I-like SAM-binding methyltransferase superfamily. rRNA adenine N(6)-methyltransferase family. RsmA subfamily.

The protein localises to the cytoplasm. It catalyses the reaction adenosine(1518)/adenosine(1519) in 16S rRNA + 4 S-adenosyl-L-methionine = N(6)-dimethyladenosine(1518)/N(6)-dimethyladenosine(1519) in 16S rRNA + 4 S-adenosyl-L-homocysteine + 4 H(+). Specifically dimethylates two adjacent adenosines (A1518 and A1519) in the loop of a conserved hairpin near the 3'-end of 16S rRNA in the 30S particle. May play a critical role in biogenesis of 30S subunits. This chain is Ribosomal RNA small subunit methyltransferase A, found in Helicobacter pylori (strain HPAG1).